A 130-amino-acid chain; its full sequence is MLVRQLDDILGTDADVKGETGTWASRRLLLKKDGMGFSLHDTIIYPGTETHLWYKNHLEAVYCIHGKGEIELVPSGELIPIRPGTMYALDKHDEHLLRASEELRLVCVFNPPLTGREDHDEDGAYPVLDD.

Belongs to the ectoine synthase family.

The catalysed reaction is (2S)-4-acetamido-2-aminobutanoate = L-ectoine + H2O. Its pathway is amine and polyamine biosynthesis; ectoine biosynthesis; L-ectoine from L-aspartate 4-semialdehyde: step 3/3. In terms of biological role, catalyzes the circularization of gamma-N-acetyl-alpha,gamma-diaminobutyric acid (ADABA) to ectoine (1,4,5,6-tetrahydro-2-methyl-4-pyrimidine carboxylic acid), which is an excellent osmoprotectant. This Desulfatibacillum aliphaticivorans protein is L-ectoine synthase.